A 335-amino-acid chain; its full sequence is MMLNATEFLTPNAINVDTVNETIAKVTLEPLERGFGHTLGNALRRILLSSLPGAAVIEAEIDGVDHEYSTLEGLQEDVLDLLLNLKGLAITLHDQNEVFLTLDKQGPGTITAADITLPHNVDIINPELVLGTLSDRGHLKMRLRVVMGRGYEPANQRREDGDTKAIGRLKLDASFSPVLRVAYQVENARVEQRTDLDRLIIELETNGTIDPEEAIRKAATILQQQISIFVDLEAEEAPEPVKEKEEVDPVLLRPVDDLELTVRSANCLKAENIYYIGDLVQRSETELLKTPNLGKKSLTEIKDVLASKDLELGMRLDNWPPADLRVDDRFSYRSR.

The segment at methionine 1–glutamate 233 is alpha N-terminal domain (alpha-NTD). The alpha C-terminal domain (alpha-CTD) stretch occupies residues valine 247 to arginine 335.

It belongs to the RNA polymerase alpha chain family. As to quaternary structure, homodimer. The RNAP catalytic core consists of 2 alpha, 1 beta, 1 beta' and 1 omega subunit. When a sigma factor is associated with the core the holoenzyme is formed, which can initiate transcription.

The catalysed reaction is RNA(n) + a ribonucleoside 5'-triphosphate = RNA(n+1) + diphosphate. Its function is as follows. DNA-dependent RNA polymerase catalyzes the transcription of DNA into RNA using the four ribonucleoside triphosphates as substrates. The polypeptide is DNA-directed RNA polymerase subunit alpha (Psychrobacter arcticus (strain DSM 17307 / VKM B-2377 / 273-4)).